Reading from the N-terminus, the 650-residue chain is Acetyl-coenzyme A synthetase (650 aa).

Residues 191–194 (RGGR), T311, and N335 each bind CoA. ATP contacts are provided by residues 387–389 (GEP), 411–416 (DTWWQT), D500, and R515. S523 provides a ligand contact to CoA. R526 lines the ATP pocket. Residues V537, H539, and V542 each coordinate Mg(2+). R584 provides a ligand contact to CoA. Position 609 is an N6-acetyllysine (K609).

The protein belongs to the ATP-dependent AMP-binding enzyme family. It depends on Mg(2+) as a cofactor. Acetylated. Deacetylation by the SIR2-homolog deacetylase activates the enzyme.

The enzyme catalyses acetate + ATP + CoA = acetyl-CoA + AMP + diphosphate. Catalyzes the conversion of acetate into acetyl-CoA (AcCoA), an essential intermediate at the junction of anabolic and catabolic pathways. AcsA undergoes a two-step reaction. In the first half reaction, AcsA combines acetate with ATP to form acetyl-adenylate (AcAMP) intermediate. In the second half reaction, it can then transfer the acetyl group from AcAMP to the sulfhydryl group of CoA, forming the product AcCoA. The sequence is that of Acetyl-coenzyme A synthetase from Shewanella oneidensis (strain ATCC 700550 / JCM 31522 / CIP 106686 / LMG 19005 / NCIMB 14063 / MR-1).